The following is a 427-amino-acid chain: Probable transcription factor At5g28040 (427 aa).

The disordered stretch occupies residues 1–81; that stretch reads MASDQRDTDF…APATKSSSGT (81 aa). A Phosphoserine modification is found at S14. The segment covering 22-32 has biased composition (gly residues); it reads GGGGGGRGGGE. Positions 33–62 are enriched in acidic residues; the sequence is TESDEDVVIPEPNEAEDDDHDPDPDPEYED.

This sequence belongs to the GeBP family.

In Arabidopsis thaliana (Mouse-ear cress), this protein is Probable transcription factor At5g28040.